Consider the following 263-residue polypeptide: MARHPYRRLRPAKSGFPEVGISEEGNIRSLHLGSDTVQSSMNLDHPSELVLSYSRAMMGWLLFTDALPQHITQIGLGGGSFARWIDTYLPDTRQTAVDINPQVIAIARNLFELPFEGEKFEIIEADGAEYIKVFRHNTDVILVDGFDGEQIIDALVEEPFFRDCRNALSSDGIFVTNWWSGDKRYQRFIERLLSVFEGRVLELPAESHGNVAVMAFQSSPKEQNIDKLKKRADKLSNAYGLDFHRMLAGLKASNPNNGKHFHL.

The PABS domain maps to 1–221; it reads MARHPYRRLR…AVMAFQSSPK (221 aa). Residues Asp-98 and 126–127 contribute to the S-methyl-5'-thioadenosine site; that span reads DG. The active-site Proton acceptor is the Asp-144.

Belongs to the spermidine/spermine synthase family. Homodimer or homotetramer.

The protein localises to the cytoplasm. It catalyses the reaction S-adenosyl 3-(methylsulfanyl)propylamine + putrescine = S-methyl-5'-thioadenosine + spermidine + H(+). It functions in the pathway amine and polyamine biosynthesis; spermidine biosynthesis; spermidine from putrescine: step 1/1. In terms of biological role, catalyzes the irreversible transfer of a propylamine group from the amino donor S-adenosylmethioninamine (decarboxy-AdoMet) to putrescine (1,4-diaminobutane) to yield spermidine. This is Polyamine aminopropyltransferase from Neisseria meningitidis serogroup A / serotype 4A (strain DSM 15465 / Z2491).